A 299-amino-acid chain; its full sequence is AUGMIN subunit 1 (299 aa).

At Ser-2 the chain carries N-acetylserine. Coiled-coil stretches lie at residues 76–96 and 164–184; these read RLKA…LESA and RKAI…EDDV.

The protein belongs to the HAUS1 family. Part of the augmin complex composed of 8 subunits. The complex acts on microtubules and interacts with gamma-tubulin in spindles and the phragmoplast. Interacts with AUG3.

It is found in the cytoplasm. The protein localises to the cytoskeleton. It localises to the spindle. Its subcellular location is the phragmoplast. In terms of biological role, involved in microtubules reorganization during spindle and phragmoplast development. The chain is AUGMIN subunit 1 from Arabidopsis thaliana (Mouse-ear cress).